The following is a 489-amino-acid chain: Rhamnulokinase (489 aa).

Residue 13 to 17 participates in ATP binding; the sequence is ASSGR. Residues C68 and C222 are joined by a disulfide bond. Substrate contacts are provided by residues G83 and 236 to 238; that span reads HDT. The active-site Proton acceptor is D237. T259 is a binding site for ATP. N296 is a binding site for substrate. Residue Q304 coordinates ATP. The cysteines at positions 353 and 370 are disulfide-linked. G402 lines the ATP pocket. C413 and C417 are joined by a disulfide.

Belongs to the rhamnulokinase family. Mg(2+) serves as cofactor.

It catalyses the reaction L-rhamnulose + ATP = L-rhamnulose 1-phosphate + ADP + H(+). It participates in carbohydrate degradation; L-rhamnose degradation; glycerone phosphate from L-rhamnose: step 2/3. Functionally, involved in the catabolism of L-rhamnose (6-deoxy-L-mannose). Catalyzes the transfer of the gamma-phosphate group from ATP to the 1-hydroxyl group of L-rhamnulose to yield L-rhamnulose 1-phosphate. The protein is Rhamnulokinase of Salmonella typhimurium (strain LT2 / SGSC1412 / ATCC 700720).